Consider the following 679-residue polypeptide: MPSEVTPKVPERPSRRKTSELFPLSGSESGDIKANSEPPTPAGTPNVPTRRPILKAKTMTSFESGMDQESLPKVPLQRPVRRSTTEELNNVMNNTSKELEEIESLISKHNIHNVSRKKSPTSVEEGKVAAIHQNGQRSASDNKTSTNPSPLEKNEHEGAEGNESAISPSNLVNKSNNEVTEHSDSEDLTEKQKVHAALDNEAGDRSHFEEKLIPGDMKVQVDVSKDVEEGSLNALPPSGITESDDKAEKFTKHPESSLEELQKHQEQQEEKIFQNPTDEESTTSLNEKQEGKDNMEVNSQPQGPSDTETVIAATSSNVPSQIASEEENDVPVIPRSRPKKDFEAHVQKEELPNTQEKRVSEECDSTLISTEEESKIPKIPSERPKRRAPPPVPKKPSSRIAAFQEMLQKQQQQDLHNNGNSSATTASADIAKKHTDSSITSDTTKADFTSKLNGLFALPGMVNPGQLPPSLEKKLSSPDTESKLGPQDQSQAKTGPLGGTRRGRGPRGRKLPSKVASVEKIEEDDNTNKIEIFNNWNVSSSFSKEKVLIDTTPGEQAERALDEKSKSIPEEQREQSPNKMEAALCPFELDEKEKLPANAESDPLSQLPQTNTVGNRKAISEESLSPSEAIANRDQNDTTEIQEQQMEDQMEVDMERELSGGYEDVDSALHSEEASFHSL.

The disordered stretch occupies residues 1-85 (MPSEVTPKVP…LQRPVRRSTT (85 aa)). Over residues 9–19 (VPERPSRRKTS) the composition is skewed to basic and acidic residues. The residue at position 18 (threonine 18) is a Phosphothreonine. At serine 36 the chain carries Phosphoserine. Threonine 58 carries the phosphothreonine modification. Serine 70 bears the Phosphoserine mark. Phosphothreonine is present on threonine 85. Serine 104 carries the phosphoserine modification. The span at 110–119 (NIHNVSRKKS) shows a compositional bias: basic residues. 3 disordered regions span residues 110–522 (NIHN…EKIE), 549–580 (IDTTPGEQAERALDEKSKSIPEEQREQSPNKM), and 593–679 (EKLP…FHSL). 2 stretches are compositionally biased toward polar residues: residues 133–149 (QNGQRSASDNKTSTNPS) and 164–178 (SAISPSNLVNKSNNE). Basic and acidic residues predominate over residues 179 to 213 (VTEHSDSEDLTEKQKVHAALDNEAGDRSHFEEKLI). Phosphoserine is present on residues serine 183, serine 206, and serine 231. Residues 243–272 (SDDKAEKFTKHPESSLEELQKHQEQQEEKI) show a composition bias toward basic and acidic residues. Threonine 277 carries the post-translational modification Phosphothreonine. A Phosphoserine modification is found at serine 284. Positions 296 to 323 (EVNSQPQGPSDTETVIAATSSNVPSQIA) are enriched in polar residues. Serine 324 is subject to Phosphoserine. Composition is skewed to basic and acidic residues over residues 339 to 361 (KKDFEAHVQKEELPNTQEKRVSE) and 372 to 383 (EESKIPKIPSER). Residues 383–396 (RPKRRAPPPVPKKP) form an interaction with SH3 domain of ABP1 region. 2 stretches are compositionally biased toward polar residues: residues 414–427 (DLHNNGNSSATTAS) and 437–452 (SSITSDTTKADFTSKL). Basic and acidic residues predominate over residues 471–482 (LEKKLSSPDTES). The segment covering 501-512 (RRGRGPRGRKLP) has biased composition (basic residues). Position 552 is a phosphothreonine (threonine 552). Over residues 556–576 (QAERALDEKSKSIPEEQREQS) the composition is skewed to basic and acidic residues. Serine 576 is subject to Phosphoserine. Residues 603 to 614 (PLSQLPQTNTVG) are compositionally biased toward polar residues. Phosphoserine is present on residues serine 620, serine 623, serine 625, serine 627, serine 667, serine 671, serine 675, and serine 678. Residues 667-679 (SALHSEEASFHSL) are compositionally biased toward basic and acidic residues.

Belongs to the AIM21 family. In terms of assembly, interacts with ribosomes. Interacts with ABP1.

The protein resides in the cytoplasm. The protein localises to the cytoskeleton. Its subcellular location is the actin patch. Involved in mitochondrial migration along actin filaments. The protein is Altered inheritance of mitochondria protein 21 (AIM21) of Saccharomyces cerevisiae (strain Lalvin EC1118 / Prise de mousse) (Baker's yeast).